The sequence spans 212 residues: Thiamine-phosphate synthase (212 aa).

38-42 (QLREK) serves as a coordination point for 4-amino-2-methyl-5-(diphosphooxymethyl)pyrimidine. Mg(2+) contacts are provided by D71 and D90. K138 lines the 4-amino-2-methyl-5-(diphosphooxymethyl)pyrimidine pocket. Position 166 (G166) interacts with 2-[(2R,5Z)-2-carboxy-4-methylthiazol-5(2H)-ylidene]ethyl phosphate.

The protein belongs to the thiamine-phosphate synthase family. Requires Mg(2+) as cofactor.

The enzyme catalyses 2-[(2R,5Z)-2-carboxy-4-methylthiazol-5(2H)-ylidene]ethyl phosphate + 4-amino-2-methyl-5-(diphosphooxymethyl)pyrimidine + 2 H(+) = thiamine phosphate + CO2 + diphosphate. The catalysed reaction is 2-(2-carboxy-4-methylthiazol-5-yl)ethyl phosphate + 4-amino-2-methyl-5-(diphosphooxymethyl)pyrimidine + 2 H(+) = thiamine phosphate + CO2 + diphosphate. It carries out the reaction 4-methyl-5-(2-phosphooxyethyl)-thiazole + 4-amino-2-methyl-5-(diphosphooxymethyl)pyrimidine + H(+) = thiamine phosphate + diphosphate. The protein operates within cofactor biosynthesis; thiamine diphosphate biosynthesis; thiamine phosphate from 4-amino-2-methyl-5-diphosphomethylpyrimidine and 4-methyl-5-(2-phosphoethyl)-thiazole: step 1/1. Condenses 4-methyl-5-(beta-hydroxyethyl)thiazole monophosphate (THZ-P) and 2-methyl-4-amino-5-hydroxymethyl pyrimidine pyrophosphate (HMP-PP) to form thiamine monophosphate (TMP). This chain is Thiamine-phosphate synthase, found in Chlamydia caviae (strain ATCC VR-813 / DSM 19441 / 03DC25 / GPIC) (Chlamydophila caviae).